A 169-amino-acid polypeptide reads, in one-letter code: Peptide methionine sulfoxide reductase MsrA (169 aa).

Cys10 is a catalytic residue.

Belongs to the MsrA Met sulfoxide reductase family.

It catalyses the reaction L-methionyl-[protein] + [thioredoxin]-disulfide + H2O = L-methionyl-(S)-S-oxide-[protein] + [thioredoxin]-dithiol. The catalysed reaction is [thioredoxin]-disulfide + L-methionine + H2O = L-methionine (S)-S-oxide + [thioredoxin]-dithiol. Functionally, has an important function as a repair enzyme for proteins that have been inactivated by oxidation. Catalyzes the reversible oxidation-reduction of methionine sulfoxide in proteins to methionine. The polypeptide is Peptide methionine sulfoxide reductase MsrA (Streptococcus pyogenes serotype M6 (strain ATCC BAA-946 / MGAS10394)).